Consider the following 284-residue polypeptide: Diaminopimelate epimerase (284 aa).

Substrate-binding residues include Asn-14 and Asn-67. Cys-76 (proton donor) is an active-site residue. Substrate is bound by residues 77–78, Asn-166, Asn-199, and 217–218; these read GN and ER. Catalysis depends on Cys-226, which acts as the Proton acceptor. A substrate-binding site is contributed by 227 to 228; the sequence is GT.

Belongs to the diaminopimelate epimerase family. In terms of assembly, homodimer.

The protein resides in the cytoplasm. The catalysed reaction is (2S,6S)-2,6-diaminopimelate = meso-2,6-diaminopimelate. The protein operates within amino-acid biosynthesis; L-lysine biosynthesis via DAP pathway; DL-2,6-diaminopimelate from LL-2,6-diaminopimelate: step 1/1. Functionally, catalyzes the stereoinversion of LL-2,6-diaminopimelate (L,L-DAP) to meso-diaminopimelate (meso-DAP), a precursor of L-lysine and an essential component of the bacterial peptidoglycan. This chain is Diaminopimelate epimerase, found in Bacillus pumilus (strain SAFR-032).